A 188-amino-acid polypeptide reads, in one-letter code: Large ribosomal subunit protein eL18 (188 aa).

Residues 153-188 form a disordered region; sequence GKAPGTPHSHTKPYIRSKGRKFERARGRRASRGYKN. 2 stretches are compositionally biased toward basic residues: residues 161–171 and 178–188; these read SHTKPYIRSKG and RGRRASRGYKN.

This sequence belongs to the eukaryotic ribosomal protein eL18 family. Component of the large ribosomal subunit.

The protein resides in the cytoplasm. The protein localises to the cytosol. It localises to the rough endoplasmic reticulum. In terms of biological role, component of the large ribosomal subunit. The ribosome is a large ribonucleoprotein complex responsible for the synthesis of proteins in the cell. The protein is Large ribosomal subunit protein eL18 (rpl18) of Ictalurus punctatus (Channel catfish).